The primary structure comprises 326 residues: Endo-beta-1,4-glucanase A (326 aa).

A signal peptide spans 1–19 (MRSLVLLSSVLALVAPSKG). The Proton donor role is filled by Glu150. Residue Glu257 is the Nucleophile of the active site.

Belongs to the glycosyl hydrolase 5 (cellulase A) family.

It localises to the secreted. It catalyses the reaction Endohydrolysis of (1-&gt;4)-beta-D-glucosidic linkages in cellulose, lichenin and cereal beta-D-glucans.. In terms of biological role, has endoglucanase activity on substrates containing beta-1,4 glycosidic bonds, like in carboxymethylcellulose (CMC), hydroxyethylcellulose (HEC) and beta-glucan. Involved in the degradation of complex natural cellulosic substrates. The protein is Endo-beta-1,4-glucanase A (eglA) of Emericella nidulans (strain FGSC A4 / ATCC 38163 / CBS 112.46 / NRRL 194 / M139) (Aspergillus nidulans).